Here is a 165-residue protein sequence, read N- to C-terminus: Shikimate kinase (165 aa).

11 to 16 (GAGKTT) lines the ATP pocket. Mg(2+) is bound at residue threonine 15. Residues aspartate 33, arginine 57, and glycine 78 each contribute to the substrate site. Residue arginine 116 coordinates ATP. Arginine 134 contributes to the substrate binding site.

Belongs to the shikimate kinase family. In terms of assembly, monomer. The cofactor is Mg(2+).

It is found in the cytoplasm. It catalyses the reaction shikimate + ATP = 3-phosphoshikimate + ADP + H(+). The protein operates within metabolic intermediate biosynthesis; chorismate biosynthesis; chorismate from D-erythrose 4-phosphate and phosphoenolpyruvate: step 5/7. Catalyzes the specific phosphorylation of the 3-hydroxyl group of shikimic acid using ATP as a cosubstrate. This is Shikimate kinase from Bacillus cereus (strain G9842).